A 356-amino-acid chain; its full sequence is D-amino-acid oxidase (356 aa).

Residues 1–17 (MAKIVVIGAGVAGLTTA) form the signal peptide. Positions 9, 44, 48, and 50 each coordinate FAD. Phe54 provides a ligand contact to anthranilate. Val171 is a binding site for FAD. N-linked (GlcNAc...) asparagine glycosylation occurs at Asn192. Residue Tyr243 participates in anthranilate binding. Tyr243 is a binding site for (R)-lactate. The N-linked (GlcNAc...) asparagine glycan is linked to Asn262. FAD is bound by residues Arg302, Ala329, Gly332, Tyr333, and Gln334. Residue Arg302 coordinates anthranilate. Arg302 serves as a coordination point for (R)-lactate.

This sequence belongs to the DAMOX/DASOX family. It depends on FAD as a cofactor.

It is found in the peroxisome matrix. It catalyses the reaction a D-alpha-amino acid + O2 + H2O = a 2-oxocarboxylate + H2O2 + NH4(+). It carries out the reaction D-alanine + O2 + H2O = pyruvate + H2O2 + NH4(+). The enzyme catalyses D-serine + O2 + H2O = 3-hydroxypyruvate + H2O2 + NH4(+). The catalysed reaction is D-phenylalanine + O2 + H2O = 3-phenylpyruvate + H2O2 + NH4(+). It catalyses the reaction D-lysine + O2 + H2O = 6-amino-2-oxohexanoate + H2O2 + NH4(+). It carries out the reaction D-tyrosine + O2 + H2O = 3-(4-hydroxyphenyl)pyruvate + H2O2 + NH4(+). The enzyme catalyses D-methionine + O2 + H2O = 4-methylsulfanyl-2-oxobutanoate + H2O2 + NH4(+). The catalysed reaction is D-tryptophan + O2 + H2O = indole-3-pyruvate + H2O2 + NH4(+). It catalyses the reaction D-leucine + O2 + H2O = 4-methyl-2-oxopentanoate + H2O2 + NH4(+). It carries out the reaction D-valine + O2 + H2O = 3-methyl-2-oxobutanoate + H2O2 + NH4(+). With respect to regulation, inhibited by benzoate and hypochlorite. In terms of biological role, catalyzes the oxidative deamination of D-amino acids with broad substrate specificity. Enables the organism to utilize D-amino acids as a source of nutrients. The chain is D-amino-acid oxidase from Trigonopsis variabilis (Yeast).